Reading from the N-terminus, the 99-residue chain is Large ribosomal subunit protein uL23 (99 aa).

It belongs to the universal ribosomal protein uL23 family. As to quaternary structure, part of the 50S ribosomal subunit. Contacts protein L29, and trigger factor when it is bound to the ribosome.

In terms of biological role, one of the early assembly proteins it binds 23S rRNA. One of the proteins that surrounds the polypeptide exit tunnel on the outside of the ribosome. Forms the main docking site for trigger factor binding to the ribosome. This chain is Large ribosomal subunit protein uL23, found in Pseudomonas entomophila (strain L48).